We begin with the raw amino-acid sequence, 109 residues long: Cell division protein ZapA (109 aa).

The stretch at 21-100 forms a coiled coil; the sequence is PDQRDALNQA…EQALLERGRI (80 aa).

It belongs to the ZapA family. Type 1 subfamily. In terms of assembly, homodimer. Interacts with FtsZ.

Its subcellular location is the cytoplasm. In terms of biological role, activator of cell division through the inhibition of FtsZ GTPase activity, therefore promoting FtsZ assembly into bundles of protofilaments necessary for the formation of the division Z ring. It is recruited early at mid-cell but it is not essential for cell division. This Shigella dysenteriae serotype 1 (strain Sd197) protein is Cell division protein ZapA.